Consider the following 460-residue polypeptide: Argininosuccinate lyase (460 aa).

Belongs to the lyase 1 family. Argininosuccinate lyase subfamily.

The protein resides in the cytoplasm. It catalyses the reaction 2-(N(omega)-L-arginino)succinate = fumarate + L-arginine. It participates in amino-acid biosynthesis; L-arginine biosynthesis; L-arginine from L-ornithine and carbamoyl phosphate: step 3/3. The polypeptide is Argininosuccinate lyase (Buchnera aphidicola subsp. Cinara cedri (strain Cc)).